A 139-amino-acid chain; its full sequence is Thioredoxin-like protein Clot (139 aa).

The Thioredoxin domain maps to 1-136; that stretch reads MTVEKVDATV…LADKVDAVVN (136 aa). Residues C49 and C52 each act as nucleophile in the active site. A disulfide bond links C49 and C52.

The protein belongs to the thioredoxin family.

Its function is as follows. Probable thiol-disulfide oxidoreductase that may participate in various redox reactions. The polypeptide is Thioredoxin-like protein Clot (Oryza sativa subsp. japonica (Rice)).